The chain runs to 819 residues: Probable phosphoenolpyruvate synthase (819 aa).

H441 (tele-phosphohistidine intermediate) is an active-site residue. Positions 540, 587, 684, 706, 707, 708, and 709 each coordinate substrate. E684 is a Mg(2+) binding site. D709 lines the Mg(2+) pocket. C756 (proton donor) is an active-site residue.

The protein belongs to the PEP-utilizing enzyme family. Requires Mg(2+) as cofactor.

The enzyme catalyses pyruvate + ATP + H2O = phosphoenolpyruvate + AMP + phosphate + 2 H(+). It participates in carbohydrate biosynthesis; gluconeogenesis. In terms of biological role, catalyzes the phosphorylation of pyruvate to phosphoenolpyruvate. The polypeptide is Probable phosphoenolpyruvate synthase (ppsA) (Pyrococcus abyssi (strain GE5 / Orsay)).